The primary structure comprises 124 residues: Small ribosomal subunit protein uS12 (124 aa).

Residues 1-32 (MPTINQLVRKGRRDKTAKVKTAALKGSPQRRG) are disordered. A 3-methylthioaspartic acid modification is found at aspartate 89. Residues 104–124 (TQGVKGRKQARSRYGAKKEKS) are disordered. Basic residues predominate over residues 108–118 (KGRKQARSRYG).

It belongs to the universal ribosomal protein uS12 family. As to quaternary structure, part of the 30S ribosomal subunit. Contacts proteins S8 and S17. May interact with IF1 in the 30S initiation complex.

Its function is as follows. With S4 and S5 plays an important role in translational accuracy. Interacts with and stabilizes bases of the 16S rRNA that are involved in tRNA selection in the A site and with the mRNA backbone. Located at the interface of the 30S and 50S subunits, it traverses the body of the 30S subunit contacting proteins on the other side and probably holding the rRNA structure together. The combined cluster of proteins S8, S12 and S17 appears to hold together the shoulder and platform of the 30S subunit. The polypeptide is Small ribosomal subunit protein uS12 (Rhodococcus jostii (strain RHA1)).